We begin with the raw amino-acid sequence, 358 residues long: Fructose-bisphosphate aldolase class 2 (358 aa).

Ser61 is a binding site for D-glyceraldehyde 3-phosphate. Asp109 (proton donor) is an active-site residue. His110, Asp144, Glu174, and His226 together coordinate Zn(2+). Gly227 is a binding site for dihydroxyacetone phosphate. Zn(2+) is bound at residue His264. Residues 265 to 267 (GGS) and 286 to 289 (NIDT) each bind dihydroxyacetone phosphate.

This sequence belongs to the class II fructose-bisphosphate aldolase family. Zn(2+) serves as cofactor.

The catalysed reaction is beta-D-fructose 1,6-bisphosphate = D-glyceraldehyde 3-phosphate + dihydroxyacetone phosphate. The protein operates within carbohydrate degradation; glycolysis; D-glyceraldehyde 3-phosphate and glycerone phosphate from D-glucose: step 4/4. Functionally, catalyzes the aldol condensation of dihydroxyacetone phosphate (DHAP or glycerone-phosphate) with glyceraldehyde 3-phosphate (G3P) to form fructose 1,6-bisphosphate (FBP) in gluconeogenesis and the reverse reaction in glycolysis. This is Fructose-bisphosphate aldolase class 2 (fbaA) from Buchnera aphidicola subsp. Acyrthosiphon pisum (strain APS) (Acyrthosiphon pisum symbiotic bacterium).